We begin with the raw amino-acid sequence, 49 residues long: Large ribosomal subunit protein bL33 (49 aa).

The protein belongs to the bacterial ribosomal protein bL33 family.

The polypeptide is Large ribosomal subunit protein bL33 (Thermosipho melanesiensis (strain DSM 12029 / CIP 104789 / BI429)).